We begin with the raw amino-acid sequence, 368 residues long: 3-dehydroquinate synthase (368 aa).

Residues 69 to 74, 103 to 107, 127 to 128, Lys-140, and Lys-149 contribute to the NAD(+) site; these read DGEAYK, GVIGD, and TT. Glu-182, His-245, and His-262 together coordinate Zn(2+).

Belongs to the sugar phosphate cyclases superfamily. Dehydroquinate synthase family. It depends on NAD(+) as a cofactor. The cofactor is Co(2+). Zn(2+) is required as a cofactor.

The protein localises to the cytoplasm. The enzyme catalyses 7-phospho-2-dehydro-3-deoxy-D-arabino-heptonate = 3-dehydroquinate + phosphate. Its pathway is metabolic intermediate biosynthesis; chorismate biosynthesis; chorismate from D-erythrose 4-phosphate and phosphoenolpyruvate: step 2/7. Its function is as follows. Catalyzes the conversion of 3-deoxy-D-arabino-heptulosonate 7-phosphate (DAHP) to dehydroquinate (DHQ). The chain is 3-dehydroquinate synthase from Pseudomonas aeruginosa (strain ATCC 15692 / DSM 22644 / CIP 104116 / JCM 14847 / LMG 12228 / 1C / PRS 101 / PAO1).